The following is a 349-amino-acid chain: MKLSKFKFNLPSELIALHPAKNRDESRLMVVHRDTGEIEHREFKDILDYYGKGDVFIFNNTKVFPARLYGNKEKTGARIEVFLLRELNEDLRLWDVLVDPARKIRIGNKLYFGEDDSMVAEVIDNTTSRGRTLRFLYDGNHDEFKKALYALGETPLPKYIEREVEPEDEDRYQNIFAAEEGAVVAPAAGLHFSRELMKRLEIKDCQFAFLTLHSGLGNFREIDVEDLTKHKMDSEQMVVNADVVDIVNKGKDEGHKVCAVGTSVMRAIETAVSTDGHLKEFEGWTNKFIFPPYDFSVATSMVTNFHMPLSTLLMMTASFGGYELIMDAYDIALKEKYRFGAYGDAMLIL.

It belongs to the QueA family. In terms of assembly, monomer.

The protein resides in the cytoplasm. The enzyme catalyses 7-aminomethyl-7-carbaguanosine(34) in tRNA + S-adenosyl-L-methionine = epoxyqueuosine(34) in tRNA + adenine + L-methionine + 2 H(+). It functions in the pathway tRNA modification; tRNA-queuosine biosynthesis. In terms of biological role, transfers and isomerizes the ribose moiety from AdoMet to the 7-aminomethyl group of 7-deazaguanine (preQ1-tRNA) to give epoxyqueuosine (oQ-tRNA). In Parabacteroides distasonis (strain ATCC 8503 / DSM 20701 / CIP 104284 / JCM 5825 / NCTC 11152), this protein is S-adenosylmethionine:tRNA ribosyltransferase-isomerase.